Reading from the N-terminus, the 273-residue chain is Putative phosphoenolpyruvate synthase regulatory protein (273 aa).

153–160 contacts ADP; sequence AVSRAGKT.

The protein belongs to the pyruvate, phosphate/water dikinase regulatory protein family. PSRP subfamily.

The catalysed reaction is [pyruvate, water dikinase] + ADP = [pyruvate, water dikinase]-phosphate + AMP + H(+). The enzyme catalyses [pyruvate, water dikinase]-phosphate + phosphate + H(+) = [pyruvate, water dikinase] + diphosphate. Its function is as follows. Bifunctional serine/threonine kinase and phosphorylase involved in the regulation of the phosphoenolpyruvate synthase (PEPS) by catalyzing its phosphorylation/dephosphorylation. This chain is Putative phosphoenolpyruvate synthase regulatory protein, found in Xanthomonas campestris pv. campestris (strain 8004).